The following is a 408-amino-acid chain: MNAPVHVDQNFEEVINAARSMREIDRKRYLWMISPALPVIGIGILAGYQFSPRPIKKIFALGGPIVLHIIIPVIDTIIGKDASNPTSEEIKQLENDPYYARLVKSFIPLQYIANVYACYLVSRKKTSFIDKILLGISMGAINGIAVNTAHELSHKADRLDHILSHLALVPTGYNHFRIEHPYGHHKRAATPEDPASSQMGETFYEFWPRTVFGSLKSAIEIETHRLKRKGKKFWSKDNELLQGWGMSAAFHSSIIAIFGKGTIPYLVTQAFYGISLFEIINYIEHYGLKRQKRADGNYERTMPEHSWNNNNIVTNLFLYQLQRHSDHHAYPTRPFQALRHFDEAPELPSGYASMLLPAMIPPLWFKMMDKRVFEHYKEDLTKANIYPKRRAKILAKFGLTDPNIENGK.

The next 4 helical transmembrane spans lie at 30–50 (LWMI…GYQF), 58–78 (IFAL…DTII), 102–122 (LVKS…YLVS), and 126–146 (TSFI…GIAV). Fe cation contacts are provided by His150, His154, His180, His184, and His185. The chain crosses the membrane as a helical span at residues 254 to 274 (IIAIFGKGTIPYLVTQAFYGI). His324, His327, and His328 together coordinate Fe cation.

This sequence belongs to the fatty acid desaturase type 1 family. AlkB subfamily. Fe(3+) serves as cofactor.

The protein resides in the cell inner membrane. It carries out the reaction octane + 2 reduced [rubredoxin] + O2 + 2 H(+) = 2 oxidized [rubredoxin] + octan-1-ol + H2O. It functions in the pathway hydrocarbon metabolism; alkane degradation. Its function is as follows. Catalyzes the hydroxylation of n-alkanes in the presence of a NADH-rubredoxin reductase and rubredoxin. It preferably hydroxylases long-chain-length alkanes with at least 12 carbon atoms. The polypeptide is Alkane 1-monooxygenase (alkB) (Acinetobacter baylyi (strain ATCC 33305 / BD413 / ADP1)).